A 173-amino-acid chain; its full sequence is uncharacterized protein (173 aa).

A propeptide spans 1–15 (MERKLSQRAGNTFKG) (leader sequence). At Phe16 the chain carries N-methylphenylalanine. A helical transmembrane segment spans residues 16 to 37 (FTLVEVLITLAIISLVFSLILI).

The protein resides in the membrane. This is an uncharacterized protein from Aquifex aeolicus (strain VF5).